A 430-amino-acid chain; its full sequence is Ribulose bisphosphate carboxylase (430 aa).

Residue Lys160 is the Proton acceptor of the active site. Substrate is bound at residue Lys162. Mg(2+) is bound by residues Lys186, Asp188, and Glu189. The residue at position 186 (Lys186) is an N6-carboxylysine. His278 functions as the Proton acceptor in the catalytic mechanism. Substrate is bound by residues Arg279, His311, 348–350 (SGG), and 370–373 (QAGG).

Belongs to the RuBisCO large chain family. Type III subfamily. In terms of assembly, homodimer or homodecamer. In contrast to form I RuBisCO, the form III RuBisCO is composed solely of large subunits. Mg(2+) is required as a cofactor.

It catalyses the reaction 2 (2R)-3-phosphoglycerate + 2 H(+) = D-ribulose 1,5-bisphosphate + CO2 + H2O. The catalysed reaction is D-ribulose 1,5-bisphosphate + O2 = 2-phosphoglycolate + (2R)-3-phosphoglycerate + 2 H(+). Its function is as follows. Catalyzes the addition of molecular CO(2) and H(2)O to ribulose 1,5-bisphosphate (RuBP), generating two molecules of 3-phosphoglycerate (3-PGA). Functions in an archaeal AMP degradation pathway, together with AMP phosphorylase and R15P isomerase. This Pyrococcus horikoshii (strain ATCC 700860 / DSM 12428 / JCM 9974 / NBRC 100139 / OT-3) protein is Ribulose bisphosphate carboxylase.